The chain runs to 130 residues: Flagellar assembly factor FliW (130 aa).

This sequence belongs to the FliW family. In terms of assembly, interacts with translational regulator CsrA and flagellin(s).

It is found in the cytoplasm. Acts as an anti-CsrA protein, binds CsrA and prevents it from repressing translation of its target genes, one of which is flagellin. Binds to flagellin and participates in the assembly of the flagellum. In Borrelia turicatae (strain 91E135), this protein is Flagellar assembly factor FliW.